Here is a 108-residue protein sequence, read N- to C-terminus: Peptidyl-prolyl cis-trans isomerase FKBP1A (108 aa).

Residues 20 to 108 (GQTVVVHYVG…TFDVELLRLE (89 aa)) form the PPIase FKBP-type domain.

It belongs to the FKBP-type PPIase family. FKBP1 subfamily.

It is found in the cytoplasm. The catalysed reaction is [protein]-peptidylproline (omega=180) = [protein]-peptidylproline (omega=0). With respect to regulation, inhibited by both FK506 and rapamycin. In terms of biological role, keeps in an inactive conformation TGFBR1, the TGF-beta type I serine/threonine kinase receptor, preventing TGF-beta receptor activation in absence of ligand. May modulate the RYR1 calcium channel activity. PPIases accelerate the folding of proteins. It catalyzes the cis-trans isomerization of proline imidic peptide bonds in oligopeptides. This chain is Peptidyl-prolyl cis-trans isomerase FKBP1A (fkbp1a), found in Xenopus laevis (African clawed frog).